A 430-amino-acid polypeptide reads, in one-letter code: UPF0597 protein BDI_1130 (430 aa).

Belongs to the UPF0597 family.

The sequence is that of UPF0597 protein BDI_1130 from Parabacteroides distasonis (strain ATCC 8503 / DSM 20701 / CIP 104284 / JCM 5825 / NCTC 11152).